The primary structure comprises 123 residues: MTKLKCKSLRGEKKDALQKKLDEQKTELATLRVSKVTGGAASKLSKIRVVRKNIARLLTVINQTQKQELRKFYADHKYKPIDLRLKKTRAIRRRLTAHELSLRSAKQQAKSRNQAVRKFAVKA.

The protein belongs to the universal ribosomal protein uL29 family.

This is Large ribosomal subunit protein uL29 (rpl-35) from Caenorhabditis elegans.